The sequence spans 60 residues: Large ribosomal subunit protein bL32 (60 aa).

This sequence belongs to the bacterial ribosomal protein bL32 family.

In Latilactobacillus sakei subsp. sakei (strain 23K) (Lactobacillus sakei subsp. sakei), this protein is Large ribosomal subunit protein bL32.